We begin with the raw amino-acid sequence, 138 residues long: Acidic phospholipase A2 ammodytin I1 (138 aa).

A signal peptide spans 1–16 (MRILWIVAVCLIGAEG). 7 disulfides stabilise this stretch: C42–C131, C44–C60, C59–C111, C65–C138, C66–C104, C73–C97, and C91–C102. Positions 43, 45, and 47 each coordinate Ca(2+). H63 is a catalytic residue. A Ca(2+)-binding site is contributed by D64. D105 is a catalytic residue.

Belongs to the phospholipase A2 family. Group II subfamily. D49 sub-subfamily. Requires Ca(2+) as cofactor. In terms of tissue distribution, expressed by the venom gland.

Its subcellular location is the secreted. The catalysed reaction is a 1,2-diacyl-sn-glycero-3-phosphocholine + H2O = a 1-acyl-sn-glycero-3-phosphocholine + a fatty acid + H(+). Snake venom phospholipase A2 (PLA2) that has enzymatic activity but is non-toxic. PLA2 catalyzes the calcium-dependent hydrolysis of the 2-acyl groups in 3-sn-phosphoglycerides. This is Acidic phospholipase A2 ammodytin I1 from Vipera ammodytes ammodytes (Western sand viper).